The following is a 2146-amino-acid chain: MYPNWGRYGGSSHYPPPPVPPPPPVALPEASPGPGYSSSTTPAAPSSSGFMSFREQHLAQLQQLQQMHQKQMQCVLQPHHLPPPPLPPPPVMPGGGYGDWQPPPPPMPPPPGPALSYQKQQQYKHQMLHHQRDGPPGLVPMELESPPESPPVPPGSYMPPSQSYMPPPQPPPSYYPPTSSQPYLPPAQPSPSQSPPSQSYLAPTPSYSSSSSSSQSYLSHSQSYLPSSQASPSRPSQGHSKSQLLAPPPPSAPPGNKTTVQQEPLESGAKNKSTEQQQAAPEPDPSTMTPQEQQQYWYRQHLLSLQQRTKVHLPGHKKGPVVAKDTPEPVKEEVTVPATSQVPESPSSEEPPLPPPNEEVPPPLPPEEPQSEDPEEDARLKQLQAAAAHWQQHQQHRVGFQYQGIMQKHTQLQQILQQYQQIIQPPPHIQTMSVDMQLRHYEMQQQQFQHLYQEWEREFQLWEEQLHSYPHKDQLQEYEKQWKTWQGHMKATQSYLQEKVNSFQNMKNQYMGNMSMPPPFVPYSQMPPPLPTMPPPVLPPSLPPPVMPPALPATVPPPGMPPPVMPPSLPTSVPPPGMPPSLSSAGPPPVLPPPSLSSAGPPPVLPPPSLSSTAPPPVMPLPPLSSATPPPGIPPPGVPQGIPPQLTAAPVPPASSSQSSQVPEKPRPALLPTPVSFGSAPPTTYHPPLQSAGPSEQVNSKAPLSKSALPYSSFSSDQGLGESSAAPSQPITAVKDMPVRSGGLLPDPPRSSYLESPRGPRFDGPRRFEDLGSRCEGPRPKGPRFEGNRPDGPRPRYEGHPAEGTKSKWGMIPRGPASQFYITPSTSLSPRQSGPQWKGPKPAFGQQHQQQPKSQAEPLSGNKEPLADTSSNQQKNFKMQSAAFSIAADVKDVKAAQSNENLSDSQQEPPKSEVSEGPVEPSNWDQNVQSMETQIDKAQAVTQPVPLANKPVPAQSTFPSKTGGMEGGTAVATSSLTADNDFKPVGIGLPHSENNQDKGLPRPDNRDNRLEGNRGNSSSYRGPGQSRMEDTRDKGLVNRGRGQAISRGPGLVKQEDFRDKMMGRREDSREKMNRGEGSRDRGLVRPGSSREKVPGGLQGSQDRGAAGSRERGPPRRAGSQERGPLRRAGSRERIPPRRAGSRERGPPRGPGSRERGLGRSDFGRDRGPFRPEPGDGGEKMYPYHRDEPPRAPWNHGEERGHEEFPLDGRNAPMERERLDDWDRERYWRECERDYQDDTLELYNREDRFSAPPSRSHDGDRRGPWWDDWERDQDMDEDYNREMERDMDRDVDRISRPMDMYDRSLDNEWDRDYGRPLDEQESQFRERDIPSLPPLPPLPPLPPLDRYRDDRWREERNREHGYDRDFRDRGELRIREYPERGDTWREKRDYVPDRMDWERERLSDRWYPSDVDRHSPMAEHMPSSHHSSEMMGSDASLDSDQGLGGVMVLSQRQHEIILKAAQELKMLREQKEQLQKMKDFGSEPQMADHLPPQESRLQNTSSRPGMYPPPGSYRPPPPMGKPPGSIVRPSAPPARSSVPVTRPPVPIPPPPPPPPLPPPPPVIKPQTSAVEQERWDEDSFYGLWDTNDEQGLNSEFKSETAAIPSAPVLPPPPVHSSIPPPGPVPMGMPPMSKPPPVQQTVDYGHGRDISTNKVEQIPYGERITLRPDPLPERSTFETEHAGQRDRYDRERDREPYFDRQSNVIADHRDFKRDRETHRDRDRDRGVIDYDRDRFDRERRPRDDRAQSYRDKKDHSSSRRGGFDRPSYDRKSDRPVYEGPSMFGGERRTYPEERMPLPAPSLSHQPPPAPRVEKKPESKNVDDILKPPGRESRPERIVVIMRGLPGSGKTHVAKLIRDKEVEFGGPAPRVLSLDDYFITEVEKEEKDPDSGKKVKKKVMEYEYEAEMEETYRTSMFKTFKKTLDDGFFPFIILDAINDRVRHFDQFWSAAKTKGFEVYLAEMSADNQTCGKRNIHGRKLKEINKMADHWETAPRHMMRLDIRSLLQDAAIEEVEMEDFDANIEEQKEEKKDAEEEESELGYIPKSKWEMDTSEAKLDKLDGLRTGTKRKRDWEAIASRMEDYLQLPDDYDTRASEPGKKRVRWADLEEKKDADRKRAIGFVVGQTDWEKITDESGHLAEKALNRTKYI.

Disordered stretches follow at residues 1–381 (MYPN…ARLK) and 562–880 (PPVM…FKMQ). A compositionally biased stretch (pro residues) spans 14–26 (YPPPPVPPPPPVA). Low complexity-rich tracts occupy residues 27-48 (LPEASPGPGYSSSTTPAAPSSS) and 58-79 (LAQLQQLQQMHQKQMQCVLQPH). Composition is skewed to pro residues over residues 80–92 (HLPPPPLPPPPVM), 101–113 (QPPPPPMPPPPGP), 147–157 (PESPPVPPGSY), 165–175 (MPPPQPPPSYY), and 183–194 (YLPPAQPSPSQS). The span at 195–237 (PPSQSYLAPTPSYSSSSSSSQSYLSHSQSYLPSSQASPSRPSQ) shows a compositional bias: low complexity. Composition is skewed to polar residues over residues 256-279 (NKTTVQQEPLESGAKNKSTEQQQA) and 286-308 (STMTPQEQQQYWYRQHLLSLQQR). Basic residues predominate over residues 309–319 (TKVHLPGHKKG). Over residues 325-334 (DTPEPVKEEV) the composition is skewed to basic and acidic residues. Pro residues-rich tracts occupy residues 349 to 368 (EEPPLPPPNEEVPPPLPPEE), 562 to 579 (PPVMPPSLPTSVPPPGMP), and 586 to 642 (GPPP…PQGI). The segment covering 643-663 (PPQLTAAPVPPASSSQSSQVP) has biased composition (low complexity). Residues 692–702 (AGPSEQVNSKA) show a composition bias toward polar residues. Lys735 bears the N6-methyllysine mark. Ser756 is modified (phosphoserine). A compositionally biased stretch (basic and acidic residues) spans 758 to 806 (RGPRFDGPRRFEDLGSRCEGPRPKGPRFEGNRPDGPRPRYEGHPAEGTK). Residue Arg814 is modified to Omega-N-methylarginine. Composition is skewed to polar residues over residues 820-835 (FYITPSTSLSPRQSGP) and 868-880 (DTSSNQQKNFKMQ). Ser829 carries the post-translational modification Phosphoserine. An Omega-N-methylarginine modification is found at Arg831. A Glycyl lysine isopeptide (Lys-Gly) (interchain with G-Cter in SUMO2) cross-link involves residue Lys891. 2 disordered regions span residues 895 to 1211 (AAQS…GRNA) and 1243 to 1351 (NRED…DDRW). 2 stretches are compositionally biased toward polar residues: residues 896–909 (AQSNENLSDSQQEP) and 923–933 (NWDQNVQSMET). A Glycyl lysine isopeptide (Lys-Gly) (interchain with G-Cter in SUMO1); alternate cross-link involves residue Lys983. Lys983 participates in a covalent cross-link: Glycyl lysine isopeptide (Lys-Gly) (interchain with G-Cter in SUMO2); alternate. Composition is skewed to basic and acidic residues over residues 994–1012 (NNQDKGLPRPDNRDNRLEG), 1027–1036 (RMEDTRDKGL), and 1053–1093 (KQED…REKV). Lys1053 participates in a covalent cross-link: Glycyl lysine isopeptide (Lys-Gly) (interchain with G-Cter in SUMO1); alternate. Residue Lys1053 forms a Glycyl lysine isopeptide (Lys-Gly) (interchain with G-Cter in SUMO2); alternate linkage. Residues Ser1100 and Ser1119 each carry the phosphoserine modification. Basic and acidic residues-rich tracts occupy residues 1129-1211 (GSRE…GRNA) and 1243-1264 (NREDRFSAPPSRSHDGDRRGPW). The span at 1266-1276 (DDWERDQDMDE) shows a compositional bias: acidic residues. Positions 1277–1328 (DYNREMERDMDRDVDRISRPMDMYDRSLDNEWDRDYGRPLDEQESQFRERDI) are enriched in basic and acidic residues. Residues 1330–1342 (SLPPLPPLPPLPP) are compositionally biased toward pro residues. Phosphoserine is present on Ser1402. 3 disordered regions span residues 1407 to 1438 (PSDVDRHSPMAEHMPSSHHSSEMMGSDASLDS), 1469 to 1573 (QKEQ…EQER), and 1602 to 1828 (IPSA…PPGR). Residues 1417–1430 (AEHMPSSHHSSEMM) show a composition bias toward low complexity. The span at 1469–1480 (QKEQLQKMKDFG) shows a compositional bias: basic and acidic residues. Over residues 1505-1520 (MYPPPGSYRPPPPMGK) the composition is skewed to pro residues. Positions 1521–1539 (PPGSIVRPSAPPARSSVPV) are enriched in low complexity. 2 stretches are compositionally biased toward pro residues: residues 1540–1562 (TRPPVPIPPPPPPPPLPPPPPVI) and 1606–1636 (PVLPPPPVHSSIPPPGPVPMGMPPMSKPPPV). A Glycyl lysine isopeptide (Lys-Gly) (interchain with G-Cter in SUMO2) cross-link involves residue Lys1652. 4 stretches are compositionally biased toward basic and acidic residues: residues 1662–1696 (ITLRPDPLPERSTFETEHAGQRDRYDRERDREPYF), 1704–1774 (ADHR…DRPV), 1783–1793 (GERRTYPEERM), and 1809–1828 (RVEKKPESKNVDDILKPPGR). Lys1710 is covalently cross-linked (Glycyl lysine isopeptide (Lys-Gly) (interchain with G-Cter in SUMO2)). Residues 2096-2103 (KKRVRWAD) are involved in interaction with PPP1CA.

Interacts with PPP1CA and NCOA5. Forms a complex with ILF2, ILF3, KHDRBS1, RBMX, NCOA5 and PPP1CA. As to expression, expressed in neuronal, neuroblastoma and embryonic kidney cell lines (at protein level).

Its subcellular location is the nucleus. It is found in the nucleus speckle. Functionally, plays a role in the reduction of telomerase activity during differentiation of embryonic stem cells by binding to the core promoter of TERT and controlling its down-regulation. The protein is YLP motif-containing protein 1 (YLPM1) of Homo sapiens (Human).